Here is a 313-residue protein sequence, read N- to C-terminus: Aspartate carbamoyltransferase catalytic subunit (313 aa).

Carbamoyl phosphate contacts are provided by R51 and T52. K80 is a binding site for L-aspartate. Positions 101, 129, and 132 each coordinate carbamoyl phosphate. Residues R162 and R224 each coordinate L-aspartate. Residues L263 and P264 each coordinate carbamoyl phosphate.

The protein belongs to the aspartate/ornithine carbamoyltransferase superfamily. ATCase family. As to quaternary structure, heterododecamer (2C3:3R2) of six catalytic PyrB chains organized as two trimers (C3), and six regulatory PyrI chains organized as three dimers (R2).

The catalysed reaction is carbamoyl phosphate + L-aspartate = N-carbamoyl-L-aspartate + phosphate + H(+). It participates in pyrimidine metabolism; UMP biosynthesis via de novo pathway; (S)-dihydroorotate from bicarbonate: step 2/3. Functionally, catalyzes the condensation of carbamoyl phosphate and aspartate to form carbamoyl aspartate and inorganic phosphate, the committed step in the de novo pyrimidine nucleotide biosynthesis pathway. The polypeptide is Aspartate carbamoyltransferase catalytic subunit (Phocaeicola vulgatus (strain ATCC 8482 / DSM 1447 / JCM 5826 / CCUG 4940 / NBRC 14291 / NCTC 11154) (Bacteroides vulgatus)).